The following is a 172-amino-acid chain: MVNFGAQSIRQTLVQLLGFAAIFTSSYMFYKGLSIVANSESPLVVVLSGSMEPAYQRGDVLLLWNRQKHVDVGEVVVYNIDGRTTPIVHRVLRSHASDNKQLLLTKGDNNAVDDVSFYGGRNQYLDREKEVVGVVKGYLPLVGYITILLAENQYFKYGLLGITGLLAFIQGE.

Topologically, residues Met-1–Gln-15 are cytoplasmic. The helical; Signal-anchor for type II membrane protein transmembrane segment at Leu-16–Val-36 threads the bilayer. At Ala-37–Glu-172 the chain is on the lumenal side. Catalysis depends on charge relay system residues Ser-50, His-89, and Asp-114. Residues Gly-158 to Ile-169 are C-terminal short (CTS) helix.

Belongs to the peptidase S26B family. Component of the signal peptidase complex (SPC) composed of a catalytic subunit SEC11 and three accessory subunits SPC1, SPC2 and SPC3. The complex induces a local thinning of the ER membrane which is used to measure the length of the signal peptide (SP) h-region of protein substrates. This ensures the selectivity of the complex towards h-regions shorter than 18-20 amino acids. SPC associates with the translocon complex.

It localises to the endoplasmic reticulum membrane. The catalysed reaction is Cleavage of hydrophobic, N-terminal signal or leader sequences from secreted and periplasmic proteins.. Catalytic component of the signal peptidase complex (SPC) which catalyzes the cleavage of N-terminal signal sequences from nascent proteins as they are translocated into the lumen of the endoplasmic reticulum. Specifically cleaves N-terminal signal peptides that contain a hydrophobic alpha-helix (h-region) shorter than 18-20 amino acids. In Yarrowia lipolytica (strain CLIB 122 / E 150) (Yeast), this protein is Signal peptidase complex catalytic subunit SEC11 (SEC11).